The following is a 528-amino-acid chain: Cytochrome b5 reductase 4 (528 aa).

M1 is modified (N-acetylmethionine). The tract at residues 1 to 29 (MLNVPSQAFPAPGSQQRVSSQGRSKVPLK) is disordered. The span at 13–24 (GSQQRVSSQGRS) shows a compositional bias: low complexity. The Cytochrome b5 heme-binding domain maps to 54 to 130 (LIEVTEEELK…LKECLVGRMA (77 aa)). Heme is bound by residues H89 and H112. Residues 172-263 (LSSPSYDWFQ…KESVSWQCLG (92 aa)) form the CS domain. The FAD-binding FR-type domain occupies 280–392 (LYYRRCQLIS…SGPEGDFKVS (113 aa)). Residues 372-387 (DRLQ…GPEG) and 399-431 (DLFL…KVKL) each bind FAD.

This sequence belongs to the flavoprotein pyridine nucleotide cytochrome reductase family. Requires FAD as cofactor. In terms of tissue distribution, ubiquitously expressed. Isoform 2 is expressed in testis, brain, skeletal muscle and in the male germline.

The protein resides in the endoplasmic reticulum. The catalysed reaction is 2 Fe(III)-[cytochrome b5] + NADH = 2 Fe(II)-[cytochrome b5] + NAD(+) + H(+). In terms of biological role, NADH-cytochrome b5 reductase involved in endoplasmic reticulum stress response pathway. Plays a critical role in protecting pancreatic beta-cells against oxidant stress, possibly by protecting the cell from excess buildup of reactive oxygen species (ROS). This Mus musculus (Mouse) protein is Cytochrome b5 reductase 4 (Cyb5r4).